We begin with the raw amino-acid sequence, 215 residues long: Cytochrome b6 (215 aa).

A helical transmembrane segment spans residues isoleucine 32–phenylalanine 52. Residue cysteine 35 coordinates heme c. Residues histidine 86 and histidine 100 each contribute to the heme b site. A run of 3 helical transmembrane segments spans residues alanine 90–phenylalanine 110, leucine 116–tyrosine 136, and leucine 186–isoleucine 206. Heme b contacts are provided by histidine 187 and histidine 202.

The protein belongs to the cytochrome b family. PetB subfamily. In terms of assembly, the 4 large subunits of the cytochrome b6-f complex are cytochrome b6, subunit IV (17 kDa polypeptide, PetD), cytochrome f and the Rieske protein, while the 4 small subunits are PetG, PetL, PetM and PetN. The complex functions as a dimer. Heme b is required as a cofactor. The cofactor is heme c.

It localises to the plastid. Its subcellular location is the chloroplast thylakoid membrane. In terms of biological role, component of the cytochrome b6-f complex, which mediates electron transfer between photosystem II (PSII) and photosystem I (PSI), cyclic electron flow around PSI, and state transitions. The sequence is that of Cytochrome b6 from Arabidopsis thaliana (Mouse-ear cress).